The following is a 257-amino-acid chain: uncharacterized protein (257 aa).

The chain crosses the membrane as a helical span at residues 6-26 (IFWLNLAAIIIISIVVSGGMF).

Belongs to the staphylococcal tandem lipoprotein family.

It is found in the cell membrane. This is an uncharacterized protein from Staphylococcus aureus (strain Mu50 / ATCC 700699).